The sequence spans 143 residues: Large ribosomal subunit protein uL11 (143 aa).

It belongs to the universal ribosomal protein uL11 family. Part of the ribosomal stalk of the 50S ribosomal subunit. Interacts with L10 and the large rRNA to form the base of the stalk. L10 forms an elongated spine to which L12 dimers bind in a sequential fashion forming a multimeric L10(L12)X complex. In terms of processing, one or more lysine residues are methylated.

In terms of biological role, forms part of the ribosomal stalk which helps the ribosome interact with GTP-bound translation factors. The chain is Large ribosomal subunit protein uL11 from Aromatoleum aromaticum (strain DSM 19018 / LMG 30748 / EbN1) (Azoarcus sp. (strain EbN1)).